We begin with the raw amino-acid sequence, 390 residues long: Probable NADH-dependent butanol dehydrogenase 2 (390 aa).

It belongs to the iron-containing alcohol dehydrogenase family.

It functions in the pathway alcohol metabolism; butanol biosynthesis. This is Probable NADH-dependent butanol dehydrogenase 2 (yugK) from Bacillus subtilis (strain 168).